A 197-amino-acid chain; its full sequence is Protein LURP-one-related 9 (197 aa).

This sequence belongs to the LOR family.

In terms of biological role, might be related to the phospholipid scramblase and tubby-like superfamily of membrane tethered transcription factors. This chain is Protein LURP-one-related 9, found in Arabidopsis thaliana (Mouse-ear cress).